A 37-amino-acid chain; its full sequence is Photosystem I reaction center subunit IX (37 aa).

The helical transmembrane segment at 4–24 threads the bilayer; that stretch reads FLSSAPVLLTAMMVFTAGLLI.

Belongs to the PsaJ family.

The protein resides in the cellular thylakoid membrane. Its function is as follows. May help in the organization of the PsaE and PsaF subunits. In Picosynechococcus sp. (strain ATCC 27264 / PCC 7002 / PR-6) (Agmenellum quadruplicatum), this protein is Photosystem I reaction center subunit IX.